The following is a 720-amino-acid chain: Iron-sulfur clusters transporter ATM1, mitochondrial (720 aa).

The transit peptide at 1–36 (MIMFRSLSVTPVWKAGLSLSHRSIPINSRLSSVRNY) directs the protein to the mitochondrion. Topologically, residues 37 to 129 (ISIGCANKTG…PSGDNKVKIR (93 aa)) are mitochondrial matrix. Residues 64 to 77 (RFNSSSNGNGTDKN) are compositionally biased toward polar residues. Residues 64-102 (RFNSSSNGNGTDKNASVAPKTEVKKIVPPKPSTNGKSKT) form a disordered region. A helical membrane pass occupies residues 130–151 (VLIALALLIGAKLLNVQVPFFF). In terms of domain architecture, ABC transmembrane type-1 spans 130 to 421 (VLIALALLIG…LGSVYRELKQ (292 aa)). Residues 152–175 (KQTIDSMNIEWGPDVATVLPVAIT) lie on the Mitochondrial intermembrane side of the membrane. A helical transmembrane segment spans residues 176–199 (MTILSYGAARFGAVMFGELRNAVF). Over 200–248 (AKVAQNAIRKVSLQTFQHLMKLDLGWHLSRQTGGLTRAMDRGTKGISYV) the chain is Mitochondrial matrix. The chain crosses the membrane as a helical span at residues 249 to 272 (LSAMVFHMIPITFEISVVCGILTY). A topological domain (mitochondrial intermembrane) is located at residue Gln273. Residues 274-294 (FGSSFAAMTFVTMLLYSFFTF) form a helical membrane-spanning segment. At 295–360 (KTTAWRTEFR…SQIKVAQSLA (66 aa)) the chain is on the mitochondrial matrix side. Glutathione is bound by residues 300–304 (RTEFR) and 363–366 (NAGQ). The helical transmembrane segment at 361 to 379 (FLNAGQNFIFTSALTAMMY) threads the bilayer. The Mitochondrial intermembrane portion of the chain corresponds to 380–394 (MGASGVMEGALTVGD). Residues 395 to 416 (LVLINQLVFQLSVPLNFLGSVY) traverse the membrane as a helical segment. Residue Gly413 coordinates glutathione. Residues 417–720 (RELKQSLIDM…EKEPRTSKKD (304 aa)) lie on the Mitochondrial matrix side of the membrane. An ABC transporter domain is found at 456 to 692 (IKFENVTFGY…PNSLYSELWN (237 aa)). ATP contacts are provided by residues Tyr465 and 489–500 (GPSGSGKSTILR).

Belongs to the ABC transporter superfamily. ABCB family. Heavy Metal importer (TC 3.A.1.210) subfamily. As to quaternary structure, homodimer.

Its subcellular location is the mitochondrion inner membrane. Performs an essential function in the generation of cytoplasmic iron-sulfur proteins by mediating the ATP-dependent export of Fe/S cluster precursors synthesized by NFS1 and other mitochondrial proteins. Hydrolyzes ATP. Binds glutathione and may function by transporting a glutathione-conjugated iron-sulfur compound. The protein is Iron-sulfur clusters transporter ATM1, mitochondrial of Kluyveromyces lactis (strain ATCC 8585 / CBS 2359 / DSM 70799 / NBRC 1267 / NRRL Y-1140 / WM37) (Yeast).